We begin with the raw amino-acid sequence, 374 residues long: Homoserine O-acetyltransferase (374 aa).

The AB hydrolase-1 domain occupies 45-353 (NAILVLHALT…PYGHDAFLIE (309 aa)). The active-site Nucleophile is Ser151. Position 220 (Arg220) interacts with substrate. Active-site residues include Asp314 and His347. Position 348 (Asp348) interacts with substrate.

It belongs to the AB hydrolase superfamily. MetX family. In terms of assembly, homodimer.

The protein localises to the cytoplasm. The catalysed reaction is L-homoserine + acetyl-CoA = O-acetyl-L-homoserine + CoA. Its pathway is amino-acid biosynthesis; L-methionine biosynthesis via de novo pathway; O-acetyl-L-homoserine from L-homoserine: step 1/1. In terms of biological role, transfers an acetyl group from acetyl-CoA to L-homoserine, forming acetyl-L-homoserine. The polypeptide is Homoserine O-acetyltransferase (Moorella thermoacetica (strain ATCC 39073 / JCM 9320)).